The sequence spans 57 residues: Large ribosomal subunit protein bL32 (57 aa).

Belongs to the bacterial ribosomal protein bL32 family.

In Geobacillus kaustophilus (strain HTA426), this protein is Large ribosomal subunit protein bL32.